A 471-amino-acid chain; its full sequence is ATP synthase subunit beta (471 aa).

152–159 (GGAGVGKT) is a binding site for ATP.

Belongs to the ATPase alpha/beta chains family. In terms of assembly, F-type ATPases have 2 components, CF(1) - the catalytic core - and CF(0) - the membrane proton channel. CF(1) has five subunits: alpha(3), beta(3), gamma(1), delta(1), epsilon(1). CF(0) has three main subunits: a(1), b(2) and c(9-12). The alpha and beta chains form an alternating ring which encloses part of the gamma chain. CF(1) is attached to CF(0) by a central stalk formed by the gamma and epsilon chains, while a peripheral stalk is formed by the delta and b chains.

It is found in the cell membrane. The enzyme catalyses ATP + H2O + 4 H(+)(in) = ADP + phosphate + 5 H(+)(out). Produces ATP from ADP in the presence of a proton gradient across the membrane. The catalytic sites are hosted primarily by the beta subunits. This Herpetosiphon aurantiacus (strain ATCC 23779 / DSM 785 / 114-95) protein is ATP synthase subunit beta.